Reading from the N-terminus, the 369-residue chain is Phospho-N-acetylmuramoyl-pentapeptide-transferase (369 aa).

Helical transmembrane passes span 2–22 (IALLIGAGVALLVALIGTPLF), 55–75 (TVVVAAVLISYFVTHLIMWMM), 86–106 (GLLLLFLMVGMGFVGFLDDFI), 120–140 (AKLILQAAVGIIFAVLVLQFP), 163–183 (LAFGGTVVGAILFVLWSNLII), 196–216 (LDGLAAGASIMVFGAYTIMGI), 239–259 (PMDLALLAAILSAALVGFLWW), 266–286 (IFMGDTGSLAIGGAVAAFAIL), 291–311 (LLLAFIGGLFVLITLSVIIQV), and 348–368 (ILAGLFVAAGLGIFYAEWVVL).

Belongs to the glycosyltransferase 4 family. MraY subfamily. The cofactor is Mg(2+).

It localises to the cell membrane. The catalysed reaction is UDP-N-acetyl-alpha-D-muramoyl-L-alanyl-gamma-D-glutamyl-meso-2,6-diaminopimeloyl-D-alanyl-D-alanine + di-trans,octa-cis-undecaprenyl phosphate = di-trans,octa-cis-undecaprenyl diphospho-N-acetyl-alpha-D-muramoyl-L-alanyl-D-glutamyl-meso-2,6-diaminopimeloyl-D-alanyl-D-alanine + UMP. It functions in the pathway cell wall biogenesis; peptidoglycan biosynthesis. Its function is as follows. Catalyzes the initial step of the lipid cycle reactions in the biosynthesis of the cell wall peptidoglycan: transfers peptidoglycan precursor phospho-MurNAc-pentapeptide from UDP-MurNAc-pentapeptide onto the lipid carrier undecaprenyl phosphate, yielding undecaprenyl-pyrophosphoryl-MurNAc-pentapeptide, known as lipid I. In Paenarthrobacter aurescens (strain TC1), this protein is Phospho-N-acetylmuramoyl-pentapeptide-transferase.